The primary structure comprises 498 residues: Probable cytosol aminopeptidase (498 aa).

Residues K267 and D272 each coordinate Mn(2+). K279 is a catalytic residue. Positions 290, 349, and 351 each coordinate Mn(2+). R353 is an active-site residue.

The protein belongs to the peptidase M17 family. Mn(2+) serves as cofactor.

The protein resides in the cytoplasm. The enzyme catalyses Release of an N-terminal amino acid, Xaa-|-Yaa-, in which Xaa is preferably Leu, but may be other amino acids including Pro although not Arg or Lys, and Yaa may be Pro. Amino acid amides and methyl esters are also readily hydrolyzed, but rates on arylamides are exceedingly low.. It carries out the reaction Release of an N-terminal amino acid, preferentially leucine, but not glutamic or aspartic acids.. Presumably involved in the processing and regular turnover of intracellular proteins. Catalyzes the removal of unsubstituted N-terminal amino acids from various peptides. This is Probable cytosol aminopeptidase from Dechloromonas aromatica (strain RCB).